Consider the following 206-residue polypeptide: Ion-translocating oxidoreductase complex subunit G (206 aa).

A helical transmembrane segment spans residues 9 to 29 (GITLALFAAGSTGLTAVINQM). An FMN phosphoryl threonine modification is found at threonine 174.

Belongs to the RnfG family. As to quaternary structure, the complex is composed of six subunits: RsxA, RsxB, RsxC, RsxD, RsxE and RsxG. The cofactor is FMN.

The protein localises to the cell inner membrane. Part of a membrane-bound complex that couples electron transfer with translocation of ions across the membrane. Required to maintain the reduced state of SoxR. This Salmonella typhi protein is Ion-translocating oxidoreductase complex subunit G.